The chain runs to 225 residues: UPF0725 protein At5g63820 (225 aa).

Belongs to the UPF0725 (EMB2204) family.

The protein is UPF0725 protein At5g63820 of Arabidopsis thaliana (Mouse-ear cress).